The sequence spans 145 residues: uncharacterized protein (145 aa).

The next 4 membrane-spanning stretches (helical) occupy residues 1–21 (MELFKSIVAVIGIIATIYFLI), 28–48 (TVLIGVGLIMSILTLNPMGAL), 54–74 (SMTSGGLIMAICSSMGFAYVM), and 96–116 (FFLIPIATIITFFINIAIPSA).

This sequence belongs to the DcuC/DcuD transporter (TC 2.A.61) family.

It is found in the cell membrane. This is an uncharacterized protein from Haemophilus influenzae (strain ATCC 51907 / DSM 11121 / KW20 / Rd).